The following is a 718-amino-acid chain: Polyribonucleotide nucleotidyltransferase (718 aa).

The Mg(2+) site is built by Asp-491 and Asp-497. The region spanning Pro-558–Ile-617 is the KH domain. Positions Gly-627–Lys-695 constitute an S1 motif domain.

The protein belongs to the polyribonucleotide nucleotidyltransferase family. Requires Mg(2+) as cofactor.

The protein resides in the cytoplasm. The enzyme catalyses RNA(n+1) + phosphate = RNA(n) + a ribonucleoside 5'-diphosphate. Its function is as follows. Involved in mRNA degradation. Catalyzes the phosphorolysis of single-stranded polyribonucleotides processively in the 3'- to 5'-direction. In Bordetella avium (strain 197N), this protein is Polyribonucleotide nucleotidyltransferase.